The primary structure comprises 354 residues: Rhodopsin (354 aa).

The Extracellular portion of the chain corresponds to 1-36 (MNGTEGPYFYVPMVNTTGIVRSPYEYPQYYLVSPAA). Residues Asn-2 and Asn-15 are each glycosylated (N-linked (GlcNAc...) asparagine). Residues 37–61 (YACLGAYMFFLILVGFPINFLTLYV) traverse the membrane as a helical segment. Residues 62–73 (TIEHKKLRTPLN) lie on the Cytoplasmic side of the membrane. Residues 74–96 (YILLNLAVADLFMVFGGFTTTIY) form a helical membrane-spanning segment. Over 97–110 (TSMHGYFVLGRLGC) the chain is Extracellular. Cys-110 and Cys-187 form a disulfide bridge. A helical membrane pass occupies residues 111–133 (NLEGYFATLGGEIGLWSLVVLAV). The short motif at 134–136 (ERW) is the 'Ionic lock' involved in activated form stabilization element. Residues 134 to 152 (ERWLVVCKPISNFRFSENH) lie on the Cytoplasmic side of the membrane. The chain crosses the membrane as a helical span at residues 153-173 (AIMGLVFTWIMANSCAAPPLL). The Extracellular portion of the chain corresponds to 174–202 (GWSRYIPEGMQCSCGVDYYTRAEGFNNES). Residues 203-224 (FVIYMFICHFCIPLIVVFFCYG) form a helical membrane-spanning segment. Residues 225-252 (RLLCAVKEAAAAQQESETTQRAEREVTR) are Cytoplasmic-facing. A helical transmembrane segment spans residues 253 to 274 (MVVIMVIGFLVCWIPYASVAWY). At 275–286 (IFTHQGSEFGPL) the chain is on the extracellular side. Residues 287–308 (FMTVPAFFAKSASIYNPLIYIC) form a helical membrane-spanning segment. Position 296 is an N6-(retinylidene)lysine (Lys-296). Over 309 to 354 (MNKQFRHCMITTLCCGKNPFEEEEGASTTASKTEASSVSSSSVSPA) the chain is Cytoplasmic. S-palmitoyl cysteine attachment occurs at residues Cys-322 and Cys-323. The disordered stretch occupies residues 333 to 354 (GASTTASKTEASSVSSSSVSPA). Positions 334 to 354 (ASTTASKTEASSVSSSSVSPA) are enriched in low complexity.

The protein belongs to the G-protein coupled receptor 1 family. Opsin subfamily. Post-translationally, phosphorylated on some or all of the serine and threonine residues present in the C-terminal region. In terms of processing, contains one covalently linked retinal chromophore.

Its subcellular location is the membrane. The protein localises to the cell projection. The protein resides in the cilium. It localises to the photoreceptor outer segment. In terms of biological role, photoreceptor required for image-forming vision at low light intensity. While most salt water fish species use retinal as chromophore, most freshwater fish use 3-dehydroretinal, or a mixture of retinal and 3-dehydroretinal. Light-induced isomerization of 11-cis to all-trans retinal triggers a conformational change that activates signaling via G-proteins. Subsequent receptor phosphorylation mediates displacement of the bound G-protein alpha subunit by arrestin and terminates signaling. The sequence is that of Rhodopsin (rho) from Poecilia reticulata (Guppy).